Here is a 148-residue protein sequence, read N- to C-terminus: Large-conductance mechanosensitive channel (148 aa).

Transmembrane regions (helical) follow at residues 9-29 and 79-99; these read AFAVKGNVVDMAVGIIIGAAF and IQTVIDFIIVAFAIFMGVKAI.

The protein belongs to the MscL family. In terms of assembly, homopentamer.

The protein resides in the cell inner membrane. Channel that opens in response to stretch forces in the membrane lipid bilayer. May participate in the regulation of osmotic pressure changes within the cell. In Pseudomonas syringae pv. tomato (strain ATCC BAA-871 / DC3000), this protein is Large-conductance mechanosensitive channel.